The sequence spans 1255 residues: DNA-directed RNA polymerase subunit beta' (1255 aa).

Residues Cys-60, Cys-62, Cys-77, and Cys-80 each contribute to the Zn(2+) site. The Mg(2+) site is built by Asp-503, Asp-505, and Asp-507. Zn(2+) is bound by residues Cys-875, Cys-950, Cys-957, and Cys-960.

Belongs to the RNA polymerase beta' chain family. As to quaternary structure, the RNAP catalytic core consists of 2 alpha, 1 beta, 1 beta' and 1 omega subunit. When a sigma factor is associated with the core the holoenzyme is formed, which can initiate transcription. Mg(2+) serves as cofactor. It depends on Zn(2+) as a cofactor.

It catalyses the reaction RNA(n) + a ribonucleoside 5'-triphosphate = RNA(n+1) + diphosphate. Its function is as follows. DNA-dependent RNA polymerase catalyzes the transcription of DNA into RNA using the four ribonucleoside triphosphates as substrates. The polypeptide is DNA-directed RNA polymerase subunit beta' (Mycoplasma capricolum subsp. capricolum (strain California kid / ATCC 27343 / NCTC 10154)).